We begin with the raw amino-acid sequence, 490 residues long: Glutamyl-tRNA(Gln) amidotransferase subunit A (490 aa).

Residues K77 and S152 each act as charge relay system in the active site. The Acyl-ester intermediate role is filled by S176.

This sequence belongs to the amidase family. GatA subfamily. In terms of assembly, heterotrimer of A, B and C subunits.

It catalyses the reaction L-glutamyl-tRNA(Gln) + L-glutamine + ATP + H2O = L-glutaminyl-tRNA(Gln) + L-glutamate + ADP + phosphate + H(+). Its function is as follows. Allows the formation of correctly charged Gln-tRNA(Gln) through the transamidation of misacylated Glu-tRNA(Gln) in organisms which lack glutaminyl-tRNA synthetase. The reaction takes place in the presence of glutamine and ATP through an activated gamma-phospho-Glu-tRNA(Gln). The polypeptide is Glutamyl-tRNA(Gln) amidotransferase subunit A (Limosilactobacillus reuteri (strain DSM 20016) (Lactobacillus reuteri)).